Consider the following 301-residue polypeptide: Ribosomal RNA small subunit methyltransferase A (301 aa).

The S-adenosyl-L-methionine site is built by Asn18, Leu20, Gly45, Glu66, Asp91, and Asn112. Residues 267–301 (PPEAAPVKEKRRMAKNKMTEPANNNLNENSAPEVD) form a disordered region. Residues 287–301 (PANNNLNENSAPEVD) are compositionally biased toward polar residues.

Belongs to the class I-like SAM-binding methyltransferase superfamily. rRNA adenine N(6)-methyltransferase family. RsmA subfamily.

The protein localises to the cytoplasm. The enzyme catalyses adenosine(1518)/adenosine(1519) in 16S rRNA + 4 S-adenosyl-L-methionine = N(6)-dimethyladenosine(1518)/N(6)-dimethyladenosine(1519) in 16S rRNA + 4 S-adenosyl-L-homocysteine + 4 H(+). Functionally, specifically dimethylates two adjacent adenosines (A1518 and A1519) in the loop of a conserved hairpin near the 3'-end of 16S rRNA in the 30S particle. May play a critical role in biogenesis of 30S subunits. This is Ribosomal RNA small subunit methyltransferase A from Colwellia psychrerythraea (strain 34H / ATCC BAA-681) (Vibrio psychroerythus).